Here is a 317-residue protein sequence, read N- to C-terminus: MHNPQLTKDGKLKHLLTTEGLPRAILNQILDTAESFVGVAEREVKKVPLLRGKTVCNIFFENSTRTRTTFEIAAKRLSADVITLNVSTSSQSKGETILDTIDNLTAMHADMFVVRHAESGAAHFIARHVAPHIHVINAGDGRHAHPTQGLLDVFTIRRYKPDMHNLRVAVVGDVLHSRVARSEIHALTTLGVPEVRVIAPKTLLPQHVEKLGVHVYHDMREGLKDIDVVMMLRLQNERMNGSLLPSAQEYFKCYGLTPEKLAFAKPDAIVMHPGPMNRGVEIDSAVADGKQSVILPQVTYGIAVRMAVMSILAGNSE.

2 residues coordinate carbamoyl phosphate: R65 and T66. K93 contributes to the L-aspartate binding site. 3 residues coordinate carbamoyl phosphate: R115, H145, and Q148. R178 and R233 together coordinate L-aspartate. Carbamoyl phosphate-binding residues include G274 and P275.

The protein belongs to the aspartate/ornithine carbamoyltransferase superfamily. ATCase family. Heterododecamer (2C3:3R2) of six catalytic PyrB chains organized as two trimers (C3), and six regulatory PyrI chains organized as three dimers (R2).

The enzyme catalyses carbamoyl phosphate + L-aspartate = N-carbamoyl-L-aspartate + phosphate + H(+). Its pathway is pyrimidine metabolism; UMP biosynthesis via de novo pathway; (S)-dihydroorotate from bicarbonate: step 2/3. Catalyzes the condensation of carbamoyl phosphate and aspartate to form carbamoyl aspartate and inorganic phosphate, the committed step in the de novo pyrimidine nucleotide biosynthesis pathway. The protein is Aspartate carbamoyltransferase catalytic subunit of Methylobacillus flagellatus (strain ATCC 51484 / DSM 6875 / VKM B-1610 / KT).